Reading from the N-terminus, the 491-residue chain is Peptidoglycan D,D-transpeptidase PbpA (491 aa).

The Cytoplasmic segment spans residues 1–8 (MNTSLRRV). A helical; Signal-anchor for type II membrane protein membrane pass occupies residues 9–29 (AVAIMVLIVLLLANATVTQVF). Topologically, residues 30–491 (AADGLRADPR…TIAAALREGS (462 aa)) are periplasmic. Residues 160 to 484 (GSVVALEPST…AAPIGRATIA (325 aa)) form a transpeptidase region. Ser222 (acyl-ester intermediate) is an active-site residue.

This sequence belongs to the transpeptidase family.

The protein localises to the cell inner membrane. It carries out the reaction Preferential cleavage: (Ac)2-L-Lys-D-Ala-|-D-Ala. Also transpeptidation of peptidyl-alanyl moieties that are N-acyl substituents of D-alanine.. The protein operates within cell wall biogenesis; peptidoglycan biosynthesis. In terms of biological role, transpeptidase that catalyzes cross-linking of the peptidoglycan cell wall. Required for the regulation of cell length. This is Peptidoglycan D,D-transpeptidase PbpA (pbpA) from Mycolicibacterium smegmatis (strain ATCC 700084 / mc(2)155) (Mycobacterium smegmatis).